A 154-amino-acid chain; its full sequence is MENNKILGINHLLFSVSDLSVSISFYEKVFDAKWLVKAEKTAYFDLNGIWLAFNEEKDIKRQEIHDSYTHIAFSIQQEDLPFWEKKLHDLGVNVLKGRKRHEGDRDSIYFSDPDGHKFELHTGSVFDRLQYYQNEKPHLSFHEGHIKALYDRNK.

The VOC domain maps to 8–123; it reads GINHLLFSVS…DGHKFELHTG (116 aa). Residues His-11, His-70, and Glu-119 each coordinate Mg(2+). Glu-119 acts as the Proton donor/acceptor in catalysis.

Belongs to the fosfomycin resistance protein family. FosB subfamily. Homodimer. Mg(2+) is required as a cofactor.

The protein localises to the cytoplasm. In terms of biological role, metallothiol transferase which confers resistance to fosfomycin by catalyzing the addition of a thiol cofactor to fosfomycin. L-cysteine is probably the physiological thiol donor. The protein is Metallothiol transferase FosB of Bacillus licheniformis (strain ATCC 14580 / DSM 13 / JCM 2505 / CCUG 7422 / NBRC 12200 / NCIMB 9375 / NCTC 10341 / NRRL NRS-1264 / Gibson 46).